Consider the following 239-residue polypeptide: Lactate utilization protein A 1 (239 aa).

The protein belongs to the LutA/YkgE family.

Its function is as follows. Is involved in L-lactate degradation and allows cells to grow with lactate as the sole carbon source. This chain is Lactate utilization protein A 1, found in Bacillus anthracis (strain A0248).